Reading from the N-terminus, the 498-residue chain is MRINPTTSGPGVSALEEKNQGRIVQIIGPVLDVAFPPGKMPNIYNALVVKGQDTVGQQINVTCEVQQLLGNNRVRAVAMSATDGLMRGMEVIDTGAPLSVPVGGATLGRIFNVLGEPVDNLGPVDTRTTSPIHRSAPAFIQLDTKLSIFETGIKVVDLLAPYRRGGKIGLFGGAGVGKTVLIMELINNIAKAHGGVSVFGGVGERTREGNDLYMEMKESGVINEQNIAESKVALVYGQMNEPPGARMRVGLTALTMAEYFRDVNEQDVLLFIDNIFRFVQAGSEVSALLGRMPSAVGYQPTLSTEMGSLQERITSTKEGSITSIQAVYVPADDLTDPAPATTFAHLDATTVLSRGLAAKGIYPAVDPLDSTSTMLQPRIVGEEHYETAQRVKQTLQRYKELQDIIAILGLDELSEDDRLTVARARKIERFLSQPFFVAEVFTGSPGKYVGLTETIRGFQLILSGELDSLPEQAFYLVGNIDEATAKAMNLDVESKLKK.

172–179 (GGAGVGKT) is a binding site for ATP.

It belongs to the ATPase alpha/beta chains family. As to quaternary structure, F-type ATPases have 2 components, CF(1) - the catalytic core - and CF(0) - the membrane proton channel. CF(1) has five subunits: alpha(3), beta(3), gamma(1), delta(1), epsilon(1). CF(0) has four main subunits: a(1), b(1), b'(1) and c(9-12).

The protein resides in the plastid. It localises to the chloroplast thylakoid membrane. It carries out the reaction ATP + H2O + 4 H(+)(in) = ADP + phosphate + 5 H(+)(out). In terms of biological role, produces ATP from ADP in the presence of a proton gradient across the membrane. The catalytic sites are hosted primarily by the beta subunits. This is ATP synthase subunit beta, chloroplastic from Nandina domestica (Heavenly bamboo).